The primary structure comprises 103 residues: Large ribosomal subunit protein uL24 (103 aa).

The protein belongs to the universal ribosomal protein uL24 family. In terms of assembly, part of the 50S ribosomal subunit.

Its function is as follows. One of two assembly initiator proteins, it binds directly to the 5'-end of the 23S rRNA, where it nucleates assembly of the 50S subunit. Functionally, one of the proteins that surrounds the polypeptide exit tunnel on the outside of the subunit. This chain is Large ribosomal subunit protein uL24, found in Haemophilus influenzae (strain ATCC 51907 / DSM 11121 / KW20 / Rd).